The sequence spans 253 residues: UDP-Glc:alpha-D-GlcNAc-diphosphoundecaprenol beta-1,3-glucosyltransferase WfgD (253 aa).

This sequence belongs to the glycosyltransferase 2 family. Requires Mn(2+) as cofactor. Mg(2+) serves as cofactor.

It localises to the cell inner membrane. It catalyses the reaction N-acetyl-alpha-D-glucosaminyl-di-trans,octa-cis-undecaprenyl diphosphate + UDP-alpha-D-glucose = beta-D-Glc-(1-&gt;3)-alpha-D-GlcNAc-di-trans,octa-cis-undecaprenyl diphosphate + UDP + H(+). It functions in the pathway bacterial outer membrane biogenesis; lipopolysaccharide biosynthesis. In terms of biological role, catalyzes the addition of Glc, the second sugar moiety of the O152-antigen repeating unit, to GlcNAc-pyrophosphate-undecaprenol. The protein is UDP-Glc:alpha-D-GlcNAc-diphosphoundecaprenol beta-1,3-glucosyltransferase WfgD (wfgD) of Escherichia coli.